Reading from the N-terminus, the 280-residue chain is ATP synthase subunit a (280 aa).

7 helical membrane passes run 45 to 65, 105 to 125, 126 to 146, 159 to 179, 190 to 210, 223 to 243, and 250 to 270; these read AINV…LFLF, LVAP…LMDL, LPVD…LKVV, LSIF…GGFF, FLFP…PISL, MIFI…LFGG, and AVFH…LTIV.

The protein belongs to the ATPase A chain family. In terms of assembly, F-type ATPases have 2 components, CF(1) - the catalytic core - and CF(0) - the membrane proton channel. CF(1) has five subunits: alpha(3), beta(3), gamma(1), delta(1), epsilon(1). CF(0) has three main subunits: a(1), b(2) and c(9-12). The alpha and beta chains form an alternating ring which encloses part of the gamma chain. CF(1) is attached to CF(0) by a central stalk formed by the gamma and epsilon chains, while a peripheral stalk is formed by the delta and b chains.

Its subcellular location is the cell inner membrane. In terms of biological role, key component of the proton channel; it plays a direct role in the translocation of protons across the membrane. The protein is ATP synthase subunit a of Thiobacillus denitrificans (strain ATCC 25259 / T1).